The chain runs to 85 residues: Protein MC005 (85 aa).

In terms of assembly, interacts with host IKBKG; this interaction prevents NF-kappa-B activation.

Its subcellular location is the host cytoplasm. Functionally, plays a role in the inhibition of the host NF-kappa-B pathway by preventing ubiquitin binding-dependent regulation of host IKBKB activation by IKBKG/NEMO. The chain is Protein MC005 (MC005L) from Molluscum contagiosum virus subtype 1 (MOCV).